The sequence spans 329 residues: GTPase Obg (329 aa).

One can recognise an Obg domain in the interval 1–159 (MQFIDQARIT…WPLQLELKLL (159 aa)). One can recognise an OBG-type G domain in the interval 160–328 (AEVGIIGLPN…LLAETWVELG (169 aa)). ATP contacts are provided by residues 166–173 (GLPNAGKS), 191–195 (FTTLV), 213–216 (DIPG), 280–283 (NKQE), and 309–311 (SAA). The Mg(2+) site is built by S173 and T193.

The protein belongs to the TRAFAC class OBG-HflX-like GTPase superfamily. OBG GTPase family. As to quaternary structure, monomer. Requires Mg(2+) as cofactor.

It localises to the cytoplasm. Its function is as follows. An essential GTPase which binds GTP, GDP and possibly (p)ppGpp with moderate affinity, with high nucleotide exchange rates and a fairly low GTP hydrolysis rate. Plays a role in control of the cell cycle, stress response, ribosome biogenesis and in those bacteria that undergo differentiation, in morphogenesis control. This Synechococcus sp. (strain CC9605) protein is GTPase Obg.